The sequence spans 301 residues: Nucleotide-binding protein Helmi_06460 (301 aa).

ATP is bound at residue 17-24; the sequence is GLSGAGKS. 68–71 is a binding site for GTP; it reads DIRG.

It belongs to the RapZ-like family.

In terms of biological role, displays ATPase and GTPase activities. This Heliobacterium modesticaldum (strain ATCC 51547 / Ice1) protein is Nucleotide-binding protein Helmi_06460.